We begin with the raw amino-acid sequence, 437 residues long: Kynureninase (437 aa).

Pyridoxal 5'-phosphate-binding positions include leucine 99, threonine 100, 127–130 (FPSD), serine 183, aspartate 212, histidine 215, and tyrosine 237. The residue at position 238 (lysine 238) is an N6-(pyridoxal phosphate)lysine. Pyridoxal 5'-phosphate is bound by residues tryptophan 267 and asparagine 295.

Belongs to the kynureninase family. As to quaternary structure, homodimer. It depends on pyridoxal 5'-phosphate as a cofactor.

The protein localises to the cytoplasm. It catalyses the reaction L-kynurenine + H2O = anthranilate + L-alanine + H(+). The catalysed reaction is 3-hydroxy-L-kynurenine + H2O = 3-hydroxyanthranilate + L-alanine + H(+). Its pathway is amino-acid degradation; L-kynurenine degradation; L-alanine and anthranilate from L-kynurenine: step 1/1. The protein operates within cofactor biosynthesis; NAD(+) biosynthesis; quinolinate from L-kynurenine: step 2/3. Functionally, catalyzes the cleavage of L-kynurenine (L-Kyn) and L-3-hydroxykynurenine (L-3OHKyn) into anthranilic acid (AA) and 3-hydroxyanthranilic acid (3-OHAA), respectively. This Yarrowia lipolytica (strain CLIB 122 / E 150) (Yeast) protein is Kynureninase.